The following is a 317-amino-acid chain: 4-diphosphocytidyl-2-C-methyl-D-erythritol kinase (317 aa).

The active site involves Lys11. 99 to 109 (PVAAGLAGGST) contacts ATP. Asp141 is an active-site residue.

The protein belongs to the GHMP kinase family. IspE subfamily.

The catalysed reaction is 4-CDP-2-C-methyl-D-erythritol + ATP = 4-CDP-2-C-methyl-D-erythritol 2-phosphate + ADP + H(+). Its pathway is isoprenoid biosynthesis; isopentenyl diphosphate biosynthesis via DXP pathway; isopentenyl diphosphate from 1-deoxy-D-xylulose 5-phosphate: step 3/6. Functionally, catalyzes the phosphorylation of the position 2 hydroxy group of 4-diphosphocytidyl-2C-methyl-D-erythritol. The protein is 4-diphosphocytidyl-2-C-methyl-D-erythritol kinase of Trichormus variabilis (strain ATCC 29413 / PCC 7937) (Anabaena variabilis).